Here is a 305-residue protein sequence, read N- to C-terminus: ATP synthase gamma chain (305 aa).

This sequence belongs to the ATPase gamma chain family. F-type ATPases have 2 components, CF(1) - the catalytic core - and CF(0) - the membrane proton channel. CF(1) has five subunits: alpha(3), beta(3), gamma(1), delta(1), epsilon(1). CF(0) has three main subunits: a, b and c.

It is found in the cell membrane. In terms of biological role, produces ATP from ADP in the presence of a proton gradient across the membrane. The gamma chain is believed to be important in regulating ATPase activity and the flow of protons through the CF(0) complex. The protein is ATP synthase gamma chain of Streptomyces coelicolor (strain ATCC BAA-471 / A3(2) / M145).